A 557-amino-acid polypeptide reads, in one-letter code: Probable phenylalanine--tRNA ligase beta subunit (557 aa).

Residues 276-352 enclose the B5 domain; the sequence is MHNRSYVMGL…IAHGFNNFRR (77 aa). Positions 330, 336, 339, and 340 each coordinate Mg(2+).

It belongs to the phenylalanyl-tRNA synthetase beta subunit family. Type 2 subfamily. As to quaternary structure, tetramer of two alpha and two beta subunits. It depends on Mg(2+) as a cofactor.

It localises to the cytoplasm. The enzyme catalyses tRNA(Phe) + L-phenylalanine + ATP = L-phenylalanyl-tRNA(Phe) + AMP + diphosphate + H(+). The sequence is that of Probable phenylalanine--tRNA ligase beta subunit from Encephalitozoon cuniculi (strain GB-M1) (Microsporidian parasite).